The following is an 81-amino-acid chain: ATP synthase subunit c, chloroplastic (81 aa).

Helical transmembrane passes span 3–23 (PLIS…ASIG) and 53–73 (LLLS…VALA).

This sequence belongs to the ATPase C chain family. In terms of assembly, F-type ATPases have 2 components, F(1) - the catalytic core - and F(0) - the membrane proton channel. F(1) has five subunits: alpha(3), beta(3), gamma(1), delta(1), epsilon(1). F(0) has four main subunits: a(1), b(1), b'(1) and c(10-14). The alpha and beta chains form an alternating ring which encloses part of the gamma chain. F(1) is attached to F(0) by a central stalk formed by the gamma and epsilon chains, while a peripheral stalk is formed by the delta, b and b' chains.

It is found in the plastid. The protein localises to the chloroplast thylakoid membrane. Its function is as follows. F(1)F(0) ATP synthase produces ATP from ADP in the presence of a proton or sodium gradient. F-type ATPases consist of two structural domains, F(1) containing the extramembraneous catalytic core and F(0) containing the membrane proton channel, linked together by a central stalk and a peripheral stalk. During catalysis, ATP synthesis in the catalytic domain of F(1) is coupled via a rotary mechanism of the central stalk subunits to proton translocation. Key component of the F(0) channel; it plays a direct role in translocation across the membrane. A homomeric c-ring of between 10-14 subunits forms the central stalk rotor element with the F(1) delta and epsilon subunits. The chain is ATP synthase subunit c, chloroplastic from Angiopteris evecta (Mule's foot fern).